A 674-amino-acid chain; its full sequence is DNA mismatch repair protein MutL (674 aa).

Belongs to the DNA mismatch repair MutL/HexB family.

Functionally, this protein is involved in the repair of mismatches in DNA. It is required for dam-dependent methyl-directed DNA mismatch repair. May act as a 'molecular matchmaker', a protein that promotes the formation of a stable complex between two or more DNA-binding proteins in an ATP-dependent manner without itself being part of a final effector complex. This chain is DNA mismatch repair protein MutL, found in Clostridium perfringens (strain ATCC 13124 / DSM 756 / JCM 1290 / NCIMB 6125 / NCTC 8237 / Type A).